The chain runs to 269 residues: Shikimate dehydrogenase (NADP(+)) (269 aa).

Shikimate-binding positions include 17–19 and Thr64; that span reads SKS. The active-site Proton acceptor is Lys68. Glu80 lines the NADP(+) pocket. Shikimate-binding residues include Asn89 and Asp105. Residues 130 to 134, 154 to 159, and Met213 each bind NADP(+); these read GAGGA and NRTHAK. A shikimate-binding site is contributed by Tyr215. Gly237 is an NADP(+) binding site.

Belongs to the shikimate dehydrogenase family. As to quaternary structure, homodimer.

It catalyses the reaction shikimate + NADP(+) = 3-dehydroshikimate + NADPH + H(+). Its pathway is metabolic intermediate biosynthesis; chorismate biosynthesis; chorismate from D-erythrose 4-phosphate and phosphoenolpyruvate: step 4/7. Functionally, involved in the biosynthesis of the chorismate, which leads to the biosynthesis of aromatic amino acids. Catalyzes the reversible NADPH linked reduction of 3-dehydroshikimate (DHSA) to yield shikimate (SA). This chain is Shikimate dehydrogenase (NADP(+)), found in Neisseria pharyngis.